A 94-amino-acid chain; its full sequence is Phosphoribosyl-ATP pyrophosphatase (94 aa).

Belongs to the PRA-PH family.

It is found in the cytoplasm. It catalyses the reaction 1-(5-phospho-beta-D-ribosyl)-ATP + H2O = 1-(5-phospho-beta-D-ribosyl)-5'-AMP + diphosphate + H(+). The protein operates within amino-acid biosynthesis; L-histidine biosynthesis; L-histidine from 5-phospho-alpha-D-ribose 1-diphosphate: step 2/9. In Pyrobaculum neutrophilum (strain DSM 2338 / JCM 9278 / NBRC 100436 / V24Sta) (Thermoproteus neutrophilus), this protein is Phosphoribosyl-ATP pyrophosphatase.